The primary structure comprises 208 residues: Imidazoleglycerol-phosphate dehydratase (208 aa).

The protein belongs to the imidazoleglycerol-phosphate dehydratase family.

The protein localises to the cytoplasm. It catalyses the reaction D-erythro-1-(imidazol-4-yl)glycerol 3-phosphate = 3-(imidazol-4-yl)-2-oxopropyl phosphate + H2O. Its pathway is amino-acid biosynthesis; L-histidine biosynthesis; L-histidine from 5-phospho-alpha-D-ribose 1-diphosphate: step 6/9. The protein is Imidazoleglycerol-phosphate dehydratase of Prochlorococcus marinus (strain MIT 9211).